Consider the following 224-residue polypeptide: Ribose-5-phosphate isomerase A (224 aa).

Residues 26–29, 81–84, and 94–97 each bind substrate; these read TGST, DGAD, and KGGG. Glu103 functions as the Proton acceptor in the catalytic mechanism. Position 121 (Lys121) interacts with substrate.

Belongs to the ribose 5-phosphate isomerase family. Homodimer.

The catalysed reaction is aldehydo-D-ribose 5-phosphate = D-ribulose 5-phosphate. The protein operates within carbohydrate degradation; pentose phosphate pathway; D-ribose 5-phosphate from D-ribulose 5-phosphate (non-oxidative stage): step 1/1. Catalyzes the reversible conversion of ribose-5-phosphate to ribulose 5-phosphate. This is Ribose-5-phosphate isomerase A from Listeria monocytogenes serovar 1/2a (strain ATCC BAA-679 / EGD-e).